The primary structure comprises 183 residues: Oleosin Bn-V (183 aa).

The segment at 1-47 (PARTHHDITTRDQYPLISRDRDQYGMIGRDQYNMSGQNYSKSRQIAK) is polar. 2 repeats span residues 11–20 (RDQYPLISRD) and 21–30 (RDQYGMIGRD). The interval 48–119 (ATTAVTAGDS…AAITVFSWIY (72 aa)) is hydrophobic. 2 consecutive transmembrane segments (helical) span residues 57–77 (SLLV…IVAT) and 99–119 (TGFL…SWIY). The tract at residues 154–183 (YGQQHTGEEHDRDRDHRTDRDRTRGTQHTT) is disordered. A compositionally biased stretch (basic and acidic residues) spans 159-177 (TGEEHDRDRDHRTDRDRTR).

It belongs to the oleosin family.

The protein localises to the lipid droplet. Its subcellular location is the membrane. Functionally, may have a structural role to stabilize the lipid body during desiccation of the seed by preventing coalescence of the oil. Probably interacts with both lipid and phospholipid moieties of lipid bodies. May also provide recognition signals for specific lipase anchorage in lipolysis during seedling growth. The sequence is that of Oleosin Bn-V from Brassica napus (Rape).